The following is a 179-amino-acid chain: Large ribosomal subunit protein uL5 (179 aa).

Belongs to the universal ribosomal protein uL5 family. In terms of assembly, part of the 50S ribosomal subunit; part of the 5S rRNA/L5/L18/L25 subcomplex. Contacts the 5S rRNA and the P site tRNA. Forms a bridge to the 30S subunit in the 70S ribosome.

This is one of the proteins that bind and probably mediate the attachment of the 5S RNA into the large ribosomal subunit, where it forms part of the central protuberance. In the 70S ribosome it contacts protein S13 of the 30S subunit (bridge B1b), connecting the 2 subunits; this bridge is implicated in subunit movement. Contacts the P site tRNA; the 5S rRNA and some of its associated proteins might help stabilize positioning of ribosome-bound tRNAs. This is Large ribosomal subunit protein uL5 from Shouchella clausii (strain KSM-K16) (Alkalihalobacillus clausii).